Consider the following 106-residue polypeptide: UPF0213 protein VPA1222 (106 aa).

Positions 7 to 82 constitute a GIY-YIG domain; that stretch reads QHWSVYLIRN…KQLTKSKKEQ (76 aa).

It belongs to the UPF0213 family.

The polypeptide is UPF0213 protein VPA1222 (Vibrio parahaemolyticus serotype O3:K6 (strain RIMD 2210633)).